The chain runs to 427 residues: 11-beta-hydroxysteroid dehydrogenase type 2 (427 aa).

Position 82-111 (82-111) interacts with NAD(+); it reads TRAVLITGCDSGFGNATAKKLDAMGFTVLA. Substrate is bound at residue Ser219. Catalysis depends on Tyr232, which acts as the Proton acceptor.

It belongs to the short-chain dehydrogenases/reductases (SDR) family. As to quaternary structure, interacts with ligand-free cytoplasmic NR3C2. In terms of tissue distribution, highly expressed in the kidney and adrenal and at lower levels in the colon.

Its subcellular location is the microsome. It is found in the endoplasmic reticulum. It carries out the reaction an 11beta-hydroxysteroid + NAD(+) = an 11-oxosteroid + NADH + H(+). It catalyses the reaction corticosterone + NAD(+) = 11-dehydrocorticosterone + NADH + H(+). The catalysed reaction is cortisol + NAD(+) = cortisone + NADH + H(+). The enzyme catalyses 11beta,17beta-dihydroxyandrost-4-ene-3-one + NAD(+) = 17beta-hydroxyandrost-4-ene-3,11-dione + NADH + H(+). It carries out the reaction 11beta-hydroxyandrost-4-ene-3,17-dione + NAD(+) = androst-4-ene-3,11,17-trione + NADH + H(+). The protein operates within steroid metabolism. Inhibited by glycyrrhetinic acid, carbenoloxone, 11-alpha-OH-progesterone and 11-beta-OH-progesterone. Catalyzes the conversion of biologically active 11beta-hydroxyglucocorticoids (11beta-hydroxysteroid) such as cortisol, to inactive 11-ketoglucocorticoids (11-oxosteroid) such as cortisone, in the presence of NAD(+). Functions as a dehydrogenase (oxidase), thereby decreasing the concentration of active glucocorticoids, thus protecting the nonselective mineralocorticoid receptor from occupation by glucocorticoids. Plays an important role in maintaining glucocorticoids balance during preimplantation and protects the fetus from excessive maternal corticosterone exposure. Catalyzes the oxidation of 11beta-hydroxytestosterone (11beta,17beta-dihydroxyandrost-4-ene-3-one) to 11-ketotestosterone (17beta-hydroxyandrost-4-ene-3,11-dione), a major bioactive androgen. Catalyzes the conversion of 11beta-hydroxyandrostenedione (11beta-hydroxyandrost-4-ene-3,17-dione) to 11-ketoandrostenedione (androst-4-ene-3,11,17-trione), which can be further metabolized to 11-ketotestosterone. Converts 7-beta-25-dihydroxycholesterol to 7-oxo-25-hydroxycholesterol in vitro. 7-beta-25-dihydroxycholesterol (not 7-oxo-25-hydroxycholesterol) acts as a ligand for the G-protein-coupled receptor (GPCR) Epstein-Barr virus-induced gene 2 (EBI2) and may thereby regulate immune cell migration. May protect ovulating oocytes and fertilizing spermatozoa from the adverse effects of cortisol. The protein is 11-beta-hydroxysteroid dehydrogenase type 2 (HSD11B2) of Ovis aries (Sheep).